The sequence spans 303 residues: Methionyl-tRNA formyltransferase (303 aa).

A (6S)-5,6,7,8-tetrahydrofolate-binding site is contributed by serine 108–proline 111.

The protein belongs to the Fmt family.

The enzyme catalyses L-methionyl-tRNA(fMet) + (6R)-10-formyltetrahydrofolate = N-formyl-L-methionyl-tRNA(fMet) + (6S)-5,6,7,8-tetrahydrofolate + H(+). Its function is as follows. Attaches a formyl group to the free amino group of methionyl-tRNA(fMet). The formyl group appears to play a dual role in the initiator identity of N-formylmethionyl-tRNA by promoting its recognition by IF2 and preventing the misappropriation of this tRNA by the elongation apparatus. In Rickettsia canadensis (strain McKiel), this protein is Methionyl-tRNA formyltransferase.